Here is a 307-residue protein sequence, read N- to C-terminus: N-acetylmuramic acid 6-phosphate etherase (307 aa).

The region spanning 57–220 (IIEAFKTNGR…TTASMIGVGK (164 aa)) is the SIS domain. The active-site Proton donor is the Glu85. The active site involves Glu116.

The protein belongs to the GCKR-like family. MurNAc-6-P etherase subfamily. In terms of assembly, homodimer.

It catalyses the reaction N-acetyl-D-muramate 6-phosphate + H2O = N-acetyl-D-glucosamine 6-phosphate + (R)-lactate. It participates in amino-sugar metabolism; N-acetylmuramate degradation. Specifically catalyzes the cleavage of the D-lactyl ether substituent of MurNAc 6-phosphate, producing GlcNAc 6-phosphate and D-lactate. In Alkaliphilus metalliredigens (strain QYMF), this protein is N-acetylmuramic acid 6-phosphate etherase.